The primary structure comprises 225 residues: Ribonuclease HII (225 aa).

The region spanning 35–225 (GLVAGVDEVG…SFRPCQISPD (191 aa)) is the RNase H type-2 domain. D41, E42, and D137 together coordinate a divalent metal cation.

It belongs to the RNase HII family. The cofactor is Mn(2+). It depends on Mg(2+) as a cofactor.

It localises to the cytoplasm. The catalysed reaction is Endonucleolytic cleavage to 5'-phosphomonoester.. Endonuclease that specifically degrades the RNA of RNA-DNA hybrids. This is Ribonuclease HII from Nostoc sp. (strain PCC 7120 / SAG 25.82 / UTEX 2576).